Reading from the N-terminus, the 597-residue chain is Phosphomethylpyrimidine synthase (597 aa).

Substrate is bound by residues Asn-207, Met-236, Tyr-265, His-301, 321–323 (SRG), 362–365 (DGLR), and Glu-401. His-405 contacts Zn(2+). Tyr-428 is a substrate binding site. Residue His-469 coordinates Zn(2+). Cys-549, Cys-552, and Cys-557 together coordinate [4Fe-4S] cluster.

Belongs to the ThiC family. Homodimer. [4Fe-4S] cluster is required as a cofactor.

The enzyme catalyses 5-amino-1-(5-phospho-beta-D-ribosyl)imidazole + S-adenosyl-L-methionine = 4-amino-2-methyl-5-(phosphooxymethyl)pyrimidine + CO + 5'-deoxyadenosine + formate + L-methionine + 3 H(+). Its pathway is cofactor biosynthesis; thiamine diphosphate biosynthesis. Catalyzes the synthesis of the hydroxymethylpyrimidine phosphate (HMP-P) moiety of thiamine from aminoimidazole ribotide (AIR) in a radical S-adenosyl-L-methionine (SAM)-dependent reaction. The chain is Phosphomethylpyrimidine synthase from Gluconobacter oxydans (strain 621H) (Gluconobacter suboxydans).